Here is an 87-residue protein sequence, read N- to C-terminus: Putative defensin-like protein 231 (87 aa).

An N-terminal signal peptide occupies residues Met-1–Ala-26. 4 disulfides stabilise this stretch: Cys-30-Cys-85, Cys-40-Cys-66, Cys-48-Cys-79, and Cys-64-Cys-81.

It belongs to the DEFL family.

The protein localises to the secreted. In Arabidopsis thaliana (Mouse-ear cress), this protein is Putative defensin-like protein 231 (SCRL25).